The primary structure comprises 383 residues: Protein COS5 (383 aa).

Residues 1-42 are Cytoplasmic-facing; the sequence is MKENELKNEKSVDVLSFKQLESQKIVLPQDLFRSSFTWFCYE. The helical transmembrane segment at 43-63 threads the bilayer; that stretch reads IYKSLAFPIWMLLWLPLSVWW. The Extracellular portion of the chain corresponds to 64–72; that stretch reads KLSNNCIYP. Residues 73–93 traverse the membrane as a helical segment; the sequence is LIVSLLVLFLGPIFVLVICGL. Over 94 to 232 the chain is Cytoplasmic; sequence SRKRSLSKQL…RSKLTWFLKR (139 aa). A helical transmembrane segment spans residues 233–253; sequence IFTIYSLPLWLAFLNCICVSQ. His254 is a topological domain (extracellular). Residues 255 to 275 traverse the membrane as a helical segment; it reads FCLAFRILCPGLFFLMMVWLF. At 276 to 383 the chain is on the cytoplasmic side; the sequence is QNMRTTALLV…SRNEESLMKK (108 aa).

It belongs to the DUP/COS family.

It localises to the membrane. This Saccharomyces cerevisiae (strain ATCC 204508 / S288c) (Baker's yeast) protein is Protein COS5 (COS5).